Here is a 248-residue protein sequence, read N- to C-terminus: Isopentenyl phosphate kinase (248 aa).

Position 7–11 (7–11 (KLGGS)) interacts with ATP. A substrate-binding site is contributed by Gly-49. Residue Gly-50 participates in ATP binding. The substrate site is built by His-54 and Gly-152. Gly-209 and Lys-213 together coordinate ATP.

This sequence belongs to the isopentenyl phosphate kinase family. As to quaternary structure, homodimer.

It carries out the reaction isopentenyl phosphate + ATP = isopentenyl diphosphate + ADP. In terms of biological role, catalyzes the phosphorylation of isopentenyl phosphate (IP) to isopentenyl diphosphate (IPP). Functions in an alternate mevalonate (MVA) pathway leading to IPP, a key precursor for the biosynthesis of isoprenoid compounds such as archaeal membrane lipids. This chain is Isopentenyl phosphate kinase, found in Haloferax volcanii (strain ATCC 29605 / DSM 3757 / JCM 8879 / NBRC 14742 / NCIMB 2012 / VKM B-1768 / DS2) (Halobacterium volcanii).